The chain runs to 582 residues: Type I secretion system ATP-binding protein PrsD (582 aa).

Helical transmembrane passes span 22-42 (FIGV…GSFF), 59-79 (LIAL…FELI), and 148-168 (IAIC…GGLI). Positions 22 to 301 (FIGVGVASAL…AIGNWRGLVA (280 aa)) constitute an ABC transmembrane type-1 domain. Positions 332–568 (LTVEGLASGP…VLRPQQVERQ (237 aa)) constitute an ABC transporter domain. 366–373 (GPSASGKS) contacts ATP.

The protein belongs to the ABC transporter superfamily. Part of a type I secretion system composed of PrsD and PrsE.

Its subcellular location is the cell inner membrane. Its function is as follows. Mediates secretion of glycanase ExsH. This chain is Type I secretion system ATP-binding protein PrsD (prsD), found in Rhizobium meliloti (strain 1021) (Ensifer meliloti).